A 189-amino-acid chain; its full sequence is Protein jagunal homolog (189 aa).

Over 1-34 (MSSRGVRAAGTDGNDFQNRQRIAQHYQESAQYKS) the chain is Cytoplasmic. Residues 35–55 (VLKWFFVPHFLILVFMWLKVG) traverse the membrane as a helical segment. The Lumenal portion of the chain corresponds to 56–75 (SEFLRYNFGWKNAFFERLDM). The chain crosses the membrane as a helical span at residues 76 to 96 (PAAYPWEYVWCLSFIPIVLAL). Residues 97–105 (SSFQRNKLK) are Cytoplasmic-facing. A helical transmembrane segment spans residues 106–126 (VLHYAYYAEFICGIFPCMIGL). The Lumenal segment spans residues 127–150 (GGQLPELLEYANDMEGSNTPTFKG). The chain crosses the membrane as a helical span at residues 151–171 (IFPMVIIWYIFFAVALQIHGF). Topologically, residues 172–189 (SMYFMHHLAAAWAPVKRD) are cytoplasmic.

This sequence belongs to the jagunal family.

The protein localises to the endoplasmic reticulum membrane. The polypeptide is Protein jagunal homolog (Caenorhabditis briggsae).